Consider the following 399-residue polypeptide: Putative endoplasmin-like protein (399 aa).

A Glycyl lysine isopeptide (Lys-Gly) (interchain with G-Cter in SUMO2) cross-link involves residue Lys130. The segment at 350–399 is disordered; sequence LDLAVVEEPDEEPEETAEDKEQDKDKEMDVGTDEEKQETAKESTAEKDEL. Acidic residues predominate over residues 354-367; that stretch reads VVEEPDEEPEETAE. Positions 368–399 are enriched in basic and acidic residues; the sequence is DKEQDKDKEMDVGTDEEKQETAKESTAEKDEL.

Belongs to the heat shock protein 90 family.

In terms of biological role, putative molecular chaperone. This is Putative endoplasmin-like protein (HSP90B2P) from Homo sapiens (Human).